Consider the following 242-residue polypeptide: MTEVVPSSALSEVSLRLLCHDDIDTVKHLCGDWFPIEYPDSWYRDITSNKKFFSLAATYRGAIVGMIVAEIKNRTKIHKEDGDILASSFSVDTQVAYILSLGVVKEFRKHGIGSLLLESLKDHISTTAQDHCKAIYLHVLTTNNTAINFYENRDFRQHHYLPYYYSIRGVLKDGFTYVLYINGGHPPWTILDYIQHLGSALANLSPCSIPHRIYRQAHSLLCSFLPWSSISTKGGIEYSRTM.

Residues 1-192 (MTEVVPSSAL…GGHPPWTILD (192 aa)) are Cytoplasmic-facing. The N-acetyltransferase domain maps to 13 to 182 (VSLRLLCHDD…DGFTYVLYIN (170 aa)). Y38 contacts substrate. K79 bears the N6-acetyllysine; by autocatalysis mark. Residue Y97 is part of the active site. L99 serves as a coordination point for substrate. 101 to 103 (LGV) lines the acetyl-CoA pocket. N6-acetyllysine; by autocatalysis is present on residues K105, K109, and K121. 109 to 114 (KHGIGS) is an acetyl-CoA binding site. Residue H138 is part of the active site. Residues N143 and 150–153 (YENR) contribute to the acetyl-CoA site. The required for homodimerization stretch occupies residues 162-173 (PYYYSIRGVLKD). Y165 lines the substrate pocket. Positions 193–236 (YIQHLGSALANLSPCSIPHRIYRQAHSLLCSFLPWSSISTKGGI) form an intramembrane region, helical. Over 237–242 (EYSRTM) the chain is Cytoplasmic.

This sequence belongs to the acetyltransferase family. NAA60 subfamily. Monomer and homodimer; monomer in presence of substrate and homodimer in its absence. Acetylated: autoacetylation is required for optimal acetyltransferase activity.

The protein localises to the golgi apparatus membrane. The catalysed reaction is N-terminal L-methionyl-[transmembrane protein] + acetyl-CoA = N-terminal N(alpha)-acetyl-L-methionyl-[transmembrane protein] + CoA + H(+). The enzyme catalyses L-lysyl-[protein] + acetyl-CoA = N(6)-acetyl-L-lysyl-[protein] + CoA + H(+). N-alpha-acetyltransferase that specifically mediates the acetylation of N-terminal residues of the transmembrane proteins, with a strong preference for N-termini facing the cytosol. Displays N-terminal acetyltransferase activity towards a range of N-terminal sequences including those starting with Met-Lys, Met-Val, Met-Ala and Met-Met. Required for normal chromosomal segregation during anaphase. May also show histone acetyltransferase activity; such results are however unclear in vivo and would require additional experimental evidences. The protein is N-alpha-acetyltransferase 60 (Naa60) of Mus musculus (Mouse).